We begin with the raw amino-acid sequence, 306 residues long: tRNA pseudouridine synthase B (306 aa).

The active-site Nucleophile is the D51.

Belongs to the pseudouridine synthase TruB family. Type 1 subfamily.

It catalyses the reaction uridine(55) in tRNA = pseudouridine(55) in tRNA. In terms of biological role, responsible for synthesis of pseudouridine from uracil-55 in the psi GC loop of transfer RNAs. This is tRNA pseudouridine synthase B from Nocardia farcinica (strain IFM 10152).